We begin with the raw amino-acid sequence, 105 residues long: Translation initiation factor 1A (105 aa).

In terms of domain architecture, S1-like spans 12–87; that stretch reads TRVRTPREEN…QKCDIIWRYT (76 aa).

The protein belongs to the eIF-1A family.

Its function is as follows. Seems to be required for maximal rate of protein biosynthesis. Enhances ribosome dissociation into subunits and stabilizes the binding of the initiator Met-tRNA(I) to 40 S ribosomal subunits. The polypeptide is Translation initiation factor 1A (eIF1A) (Methanococcus aeolicus (strain ATCC BAA-1280 / DSM 17508 / OCM 812 / Nankai-3)).